We begin with the raw amino-acid sequence, 300 residues long: Ribosomal RNA small subunit methyltransferase H (300 aa).

S-adenosyl-L-methionine-binding positions include 46–48 (GGH), D65, F92, D107, and Q114.

It belongs to the methyltransferase superfamily. RsmH family.

It localises to the cytoplasm. It carries out the reaction cytidine(1402) in 16S rRNA + S-adenosyl-L-methionine = N(4)-methylcytidine(1402) in 16S rRNA + S-adenosyl-L-homocysteine + H(+). Specifically methylates the N4 position of cytidine in position 1402 (C1402) of 16S rRNA. This chain is Ribosomal RNA small subunit methyltransferase H, found in Prochlorococcus marinus (strain MIT 9515).